The following is a 315-amino-acid chain: Ribose-phosphate pyrophosphokinase (315 aa).

Residues 37–39 (DGE) and 96–97 (RQ) contribute to the ATP site. Residues His131 and Asp170 each contribute to the Mg(2+) site. Residue Lys194 is part of the active site. D-ribose 5-phosphate is bound by residues Arg196, Asp220, and 224–228 (DTGGT).

The protein belongs to the ribose-phosphate pyrophosphokinase family. Class I subfamily. As to quaternary structure, homohexamer. The cofactor is Mg(2+).

The protein localises to the cytoplasm. The catalysed reaction is D-ribose 5-phosphate + ATP = 5-phospho-alpha-D-ribose 1-diphosphate + AMP + H(+). It functions in the pathway metabolic intermediate biosynthesis; 5-phospho-alpha-D-ribose 1-diphosphate biosynthesis; 5-phospho-alpha-D-ribose 1-diphosphate from D-ribose 5-phosphate (route I): step 1/1. Involved in the biosynthesis of the central metabolite phospho-alpha-D-ribosyl-1-pyrophosphate (PRPP) via the transfer of pyrophosphoryl group from ATP to 1-hydroxyl of ribose-5-phosphate (Rib-5-P). The chain is Ribose-phosphate pyrophosphokinase from Salmonella typhi.